The following is a 247-amino-acid chain: Ribosomal RNA small subunit methyltransferase J (247 aa).

S-adenosyl-L-methionine contacts are provided by residues 101-102 (RD), 117-118 (ER), 153-154 (SS), and Asp171.

This sequence belongs to the methyltransferase superfamily. RsmJ family.

Its subcellular location is the cytoplasm. The enzyme catalyses guanosine(1516) in 16S rRNA + S-adenosyl-L-methionine = N(2)-methylguanosine(1516) in 16S rRNA + S-adenosyl-L-homocysteine + H(+). In terms of biological role, specifically methylates the guanosine in position 1516 of 16S rRNA. This is Ribosomal RNA small subunit methyltransferase J from Photorhabdus laumondii subsp. laumondii (strain DSM 15139 / CIP 105565 / TT01) (Photorhabdus luminescens subsp. laumondii).